Consider the following 590-residue polypeptide: Transcription factor bHLH13 (590 aa).

Disordered stretches follow at residues 274–296 (LQHH…HRQF) and 385–439 (AASS…EAER). A compositionally biased stretch (low complexity) spans 281–293 (QQQQQQPPQQQQH). Basic residues predominate over residues 416-425 (RPRKRGRRPA). The region spanning 429 to 478 (AEALNHVEAERQRREKLNQRFYALRSVVPNISKMDKASLLGDAVSYINEL) is the bHLH domain.

In terms of assembly, homodimer.

The protein resides in the nucleus. This is Transcription factor bHLH13 (BHLH13) from Arabidopsis thaliana (Mouse-ear cress).